We begin with the raw amino-acid sequence, 407 residues long: Cysteine desulfurase (407 aa).

An N6-(pyridoxal phosphate)lysine modification is found at Lys226. Cys364 functions as the Cysteine persulfide intermediate in the catalytic mechanism.

This sequence belongs to the class-V pyridoxal-phosphate-dependent aminotransferase family. Csd subfamily. As to quaternary structure, homodimer. Interacts with SufE and the SufBCD complex composed of SufB, SufC and SufD. The interaction with SufE is required to mediate the direct transfer of the sulfur atom from the S-sulfanylcysteine. It depends on pyridoxal 5'-phosphate as a cofactor.

It is found in the cytoplasm. It catalyses the reaction (sulfur carrier)-H + L-cysteine = (sulfur carrier)-SH + L-alanine. It carries out the reaction L-selenocysteine + AH2 = hydrogenselenide + L-alanine + A + H(+). It participates in cofactor biosynthesis; iron-sulfur cluster biosynthesis. Its function is as follows. Cysteine desulfurases mobilize the sulfur from L-cysteine to yield L-alanine, an essential step in sulfur metabolism for biosynthesis of a variety of sulfur-containing biomolecules. Component of the suf operon, which is activated and required under specific conditions such as oxidative stress and iron limitation. Acts as a potent selenocysteine lyase in vitro, that mobilizes selenium from L-selenocysteine. Selenocysteine lyase activity is however unsure in vivo. This is Cysteine desulfurase from Pectobacterium carotovorum subsp. carotovorum (strain PC1).